A 392-amino-acid chain; its full sequence is Keratin, type I cuticular Ha4 (392 aa).

Residues 1–56 (MSCESCLPALSCRTSCSSRPCVPPSCHGCTLPGACNIPANVGNCNWFCEGSFNGNE) form a head region. Positions 56 to 367 (EKETMQFLND…SLLESEDCNL (312 aa)) constitute an IF rod domain. The coil 1A stretch occupies residues 57-91 (KETMQFLNDRLASYMEKVRQLERENAELECRIQER). Residues 92-102 (NQQQDPLVCPA) form a linker 1 region. Positions 103 to 203 (YQAYFRTIEE…HEEEVNTLRC (101 aa)) are coil 1B. Positions 204–219 (QLGDRLNVEVDAAPTV) are linker 12. Residues 220-363 (DLNRVLNETR…NTYRSLLESE (144 aa)) are coil 2. Positions 364-392 (DCNLPCNPCATTNASGSCCGPCGSSKRCC) are tail.

The protein belongs to the intermediate filament family. Expressed in the hair root in the hair shaft cuticle and cortex.

The sequence is that of Keratin, type I cuticular Ha4 from Mus musculus (Mouse).